The chain runs to 216 residues: PEP-dependent dihydroxyacetone kinase 2, ADP-binding subunit DhaL (216 aa).

The 202-residue stretch at 9 to 210 folds into the DhaL domain; sequence AFFGHVLQDM…SWMLMNVILE (202 aa). The Mg(2+) site is built by D33, D38, and D40. Residues 41 to 44, 84 to 85, G126, M135, R182, and 195 to 197 contribute to the ADP site; these read HGIN, AS, and DPG.

Homodimer. The dihydroxyacetone kinase complex is composed of a homodimer of DhaM, a homodimer of DhaK and the subunit DhaL. It depends on Mg(2+) as a cofactor.

It is found in the cytoplasm. The enzyme catalyses dihydroxyacetone + phosphoenolpyruvate = dihydroxyacetone phosphate + pyruvate. It functions in the pathway polyol metabolism; glycerol degradation. Its function is as follows. ADP-binding subunit of the dihydroxyacetone kinase, which is responsible for the phosphoenolpyruvate (PEP)-dependent phosphorylation of dihydroxyacetone. DhaL-ADP is converted to DhaL-ATP via a phosphoryl group transfer from DhaM and transmits it to dihydroxyacetone binds to DhaK. The protein is PEP-dependent dihydroxyacetone kinase 2, ADP-binding subunit DhaL of Listeria innocua serovar 6a (strain ATCC BAA-680 / CLIP 11262).